The following is a 213-amino-acid chain: Kynurenine formamidase (213 aa).

Trp20 lines the substrate pocket. Zn(2+) contacts are provided by His50, His54, and Asp56. The Proton donor/acceptor role is filled by His60. Residues His161 and Glu173 each contribute to the Zn(2+) site.

The protein belongs to the Cyclase 1 superfamily. KynB family. In terms of assembly, homodimer. The cofactor is Zn(2+).

It carries out the reaction N-formyl-L-kynurenine + H2O = L-kynurenine + formate + H(+). It participates in amino-acid degradation; L-tryptophan degradation via kynurenine pathway; L-kynurenine from L-tryptophan: step 2/2. In terms of biological role, catalyzes the hydrolysis of N-formyl-L-kynurenine to L-kynurenine, the second step in the kynurenine pathway of tryptophan degradation. The polypeptide is Kynurenine formamidase (Pseudomonas aeruginosa (strain UCBPP-PA14)).